Here is a 239-residue protein sequence, read N- to C-terminus: Cysteine-rich venom protein 2 (239 aa).

Positions 1–19 are cleaved as a signal peptide; sequence MIALIVLPILAAVLQQSSG. The SCP domain occupies 38-166; it reads VDLHNSLRRS…EYSYFYVCQY (129 aa). 7 cysteine pairs are disulfide-bonded: Cys75–Cys153, Cys92–Cys167, Cys148–Cys164, Cys186–Cys193, Cys189–Cys198, Cys202–Cys234, and Cys219–Cys232. One can recognise a ShKT domain in the interval 198 to 234; it reads CTNPCPKKISTQLPRFGPQAGCQDKQMQSDCSATCFC.

This sequence belongs to the CRISP family. Expressed by the venom gland.

The protein localises to the secreted. Its function is as follows. Weakly blocks contraction of smooth muscle elicited by high potassium-induced depolarization, but does not block caffeine-stimulated contraction. May target voltage-gated calcium channels on smooth muscle. The sequence is that of Cysteine-rich venom protein 2 from Sistrurus catenatus edwardsii (Desert massasauga).